Here is a 428-residue protein sequence, read N- to C-terminus: uncharacterized protein (428 aa).

Disordered stretches follow at residues 1 to 25, 157 to 219, and 247 to 271; these read MRDN…PTRT, DTAK…TEQV, and DFGT…PWRP. The span at 12-22 shows a compositional bias: polar residues; it reads GSESQQTTYDP. Residues 157–171 show a composition bias toward basic and acidic residues; it reads DTAKSNEKLQGDESK. Residues 172–186 are compositionally biased toward low complexity; that stretch reads SSNGSSSTSTTTQRG. A compositionally biased stretch (polar residues) spans 206 to 217; that stretch reads GSQGNSGEQGTE.

It belongs to the adhesin P1 family.

This is an uncharacterized protein from Mycoplasma pneumoniae (strain ATCC 29342 / M129 / Subtype 1) (Mycoplasmoides pneumoniae).